We begin with the raw amino-acid sequence, 478 residues long: Divinyl ether synthase CYP74D1 (478 aa).

Position 431 (C431) interacts with heme.

This sequence belongs to the cytochrome P450 family. 9-divinyl ether synthase subfamily. As to expression, expressed in roots. Detected in stems, but not in flower buds, petioles, cotyledons or leaves.

The catalysed reaction is (9S)-hydroperoxy-(10E,12Z)-octadecadienoate = colneleate + H2O. It carries out the reaction (9S)-hydroperoxy-(10E,12Z,15Z)-octadecatrienoate = colnelenate + H2O. Its function is as follows. Involved in the biosynthesis of the anti-fungal toxins colneleate and colnelenate. Can use (9S)-hydroperoxy-(10E,12Z)-octadecadienoate (9-HPOD) and (9S)-hydroperoxy-(10E,12Z,15Z)-octadecatrienoate (9-HPOT) as substrates, but has a very low activity with the corresponding 13-hydroperoxides (13-HPOD and 13-POT). This chain is Divinyl ether synthase CYP74D1, found in Solanum lycopersicum (Tomato).